We begin with the raw amino-acid sequence, 249 residues long: tRNA (guanine-N(7)-)-methyltransferase (249 aa).

Positions 80, 105, 132, and 155 each coordinate S-adenosyl-L-methionine. Residue Asp155 is part of the active site. Residues Lys159, Asp191, and 228-231 (TKFE) each bind substrate.

It belongs to the class I-like SAM-binding methyltransferase superfamily. TrmB family.

The catalysed reaction is guanosine(46) in tRNA + S-adenosyl-L-methionine = N(7)-methylguanosine(46) in tRNA + S-adenosyl-L-homocysteine. It participates in tRNA modification; N(7)-methylguanine-tRNA biosynthesis. Catalyzes the formation of N(7)-methylguanine at position 46 (m7G46) in tRNA. This Mannheimia succiniciproducens (strain KCTC 0769BP / MBEL55E) protein is tRNA (guanine-N(7)-)-methyltransferase.